The chain runs to 695 residues: Electrogenic aspartate/glutamate antiporter Aralar, mitochondrial (695 aa).

The segment at 1-310 is N-terminal domain; it reads MPMHIPFPFN…DYSDLSNIAP (310 aa). Residues 2–345 are Mitochondrial intermembrane-facing; sequence PMHIPFPFNW…FIQVLESSYR (344 aa). EF-hand domains lie at 71–104, 105–140, 142–175, and 176–211; these read FNDE…GLLC, TPDA…TELH, KIPF…LLHD, and FHEE…VKRH. Ca(2+) contacts are provided by Asp84, Ser86, Asp88, Leu90, Glu95, Asp118, Asn122, Thr124, and Asp129. Ca(2+)-binding residues include Asp189, Thr193, and Asp200. A linker loop domain region spans residues 311 to 327; the sequence is EHYTKHMTHRLAEIKAV. The tract at residues 336-627 is carrier domain; it reads FIQVLESSYR…RLFYVDFGGT (292 aa). Solcar repeat units lie at residues 340-431, 439-523, and 531-619; these read LESS…VRDK, IPTW…TKAM, and NHPL…LQRL. Residues 346-363 form a helical membrane-spanning segment; it reads FTLGSFAGAVGATVVYPI. Residues 364–405 are Mitochondrial matrix-facing; it reads DLVKTRMQNQRAGSYIGEVAYRNSWDCFKKVVRHEGFMGLYR. Residues 406-425 traverse the membrane as a helical segment; that stretch reads GLLPQLMGVAPEKAIKLTVN. Topologically, residues 426 to 448 are mitochondrial intermembrane; sequence DLVRDKLTDKKGNIPTWAEVLAG. A helical transmembrane segment spans residues 449-462; sequence GCAGASQVVFTNPL. The Mitochondrial matrix segment spans residues 463 to 497; it reads EIVKIRLQVAGEIASGSKIRAWSVVRELGLFGLYK. Residues 498–517 traverse the membrane as a helical segment; it reads GARACLLRDVPFSAIYFPTY. Topologically, residues 518–536 are mitochondrial intermembrane; that stretch reads AHTKAMMADKDGYNHPLTL. A helical transmembrane segment spans residues 537 to 554; that stretch reads LAAGAIAGVPAASLVTPA. At 555–593 the chain is on the mitochondrial matrix side; the sequence is DVIKTRLQVVARSGQTTYTGVWDATKKIMAEEGPRAFWK. Residues 594-613 traverse the membrane as a helical segment; that stretch reads GTAARVFRSSPQFGVTLVTY. Topologically, residues 614-695 are mitochondrial intermembrane; it reads ELLQRLFYVD…AASPSTATGS (82 aa). The interval 628–695 is C-terminal domain; sequence QPKGSEAHKI…AASPSTATGS (68 aa).

The protein belongs to the mitochondrial carrier (TC 2.A.29) family. In terms of assembly, homodimer (via N-terminus). It depends on Ca(2+) as a cofactor. As to expression, expressed throughout the body in both males and females, including in ovaries and testes. Specifically expressed in female ovaries. In terms of tissue distribution, expressed throughout the body in both males and females but absent from ovaries and testes.

The protein resides in the mitochondrion inner membrane. It carries out the reaction L-aspartate(in) + L-glutamate(out) + H(+)(out) = L-aspartate(out) + L-glutamate(in) + H(+)(in). It catalyses the reaction 3-sulfino-L-alanine(out) + L-glutamate(in) + H(+)(in) = 3-sulfino-L-alanine(in) + L-glutamate(out) + H(+)(out). The enzyme catalyses L-2-aminoadipate(in) + L-glutamate(out) + H(+)(out) = L-2-aminoadipate(out) + L-glutamate(in) + H(+)(in). The catalysed reaction is L-glutamine(in) + L-glutamate(out) + Na(+)(out) + H(+)(out) = L-glutamine(out) + L-glutamate(in) + Na(+)(in) + H(+)(in). With respect to regulation, activated by Ca(2+). Inhibited by p-chloromercuribenzoate, pyrocarbonate, mersalyl, tannic acid and N-ethylmaleimide. Its function is as follows. Mitochondrial electrogenic aspartate/glutamate antiporter that favors efflux of aspartate and entry of glutamate and proton within the mitochondria as part of the malate-aspartate shuttle. Also mediates the exchange of L-cysteinesulfinate (3-sulfino-L-alanine) for L-glutamate. Necessary for gamma-aminobutyric acid (GABA) uptake in brain mitochondria in response to increased mitochondrial membrane polarization; does not possess detectable GABA transport activity but role may be indirect. Possesses transport activity towards L-aspartate, L-glutamate and L-cysteinesulfinate (3-sulfino-L-alanine). L-glutamine transport activity is undetectable. GABA transport activity is undetectable. Functionally, possesses transport activity towards L-aspartate, L-glutamate and L-cysteinesulfinate (3-sulfino-L-alanine). Has a wider substrate specificity range that includes L-2-aminoadipate and L-glutamine. GABA transport activity is undetectable. This chain is Electrogenic aspartate/glutamate antiporter Aralar, mitochondrial, found in Drosophila melanogaster (Fruit fly).